Reading from the N-terminus, the 289-residue chain is Shikimate dehydrogenase (NADP(+)) (289 aa).

Shikimate-binding positions include 19–21 and Thr66; that span reads SLS. The active-site Proton acceptor is the Lys70. Asn91 and Asp106 together coordinate shikimate. NADP(+) contacts are provided by residues 131 to 135 and Leu229; that span reads GNGGA. Tyr231 contributes to the shikimate binding site. NADP(+) is bound at residue Gly252.

It belongs to the shikimate dehydrogenase family. In terms of assembly, homodimer.

The catalysed reaction is shikimate + NADP(+) = 3-dehydroshikimate + NADPH + H(+). It participates in metabolic intermediate biosynthesis; chorismate biosynthesis; chorismate from D-erythrose 4-phosphate and phosphoenolpyruvate: step 4/7. In terms of biological role, involved in the biosynthesis of the chorismate, which leads to the biosynthesis of aromatic amino acids. Catalyzes the reversible NADPH linked reduction of 3-dehydroshikimate (DHSA) to yield shikimate (SA). The sequence is that of Shikimate dehydrogenase (NADP(+)) from Nostoc sp. (strain PCC 7120 / SAG 25.82 / UTEX 2576).